A 614-amino-acid polypeptide reads, in one-letter code: Aspartate--tRNA ligase (614 aa).

Glu-174 contributes to the L-aspartate binding site. Residues 198-201 (QLFK) form an aspartate region. An L-aspartate-binding site is contributed by Arg-220. ATP-binding positions include 220–222 (RDE) and Gln-229. His-448 is an L-aspartate binding site. Glu-482 is an ATP binding site. Arg-489 serves as a coordination point for L-aspartate. 534-537 (GLDR) contacts ATP.

The protein belongs to the class-II aminoacyl-tRNA synthetase family. Type 1 subfamily. In terms of assembly, homodimer.

It localises to the cytoplasm. The enzyme catalyses tRNA(Asp) + L-aspartate + ATP = L-aspartyl-tRNA(Asp) + AMP + diphosphate. Functionally, catalyzes the attachment of L-aspartate to tRNA(Asp) in a two-step reaction: L-aspartate is first activated by ATP to form Asp-AMP and then transferred to the acceptor end of tRNA(Asp). The protein is Aspartate--tRNA ligase of Lactobacillus acidophilus (strain ATCC 700396 / NCK56 / N2 / NCFM).